Reading from the N-terminus, the 233-residue chain is Orotidine 5'-phosphate decarboxylase (233 aa).

Residues Asp-13, Lys-35, 62 to 71 (DLKFHDIPNT), Thr-122, Arg-182, Gln-191, Gly-211, and Arg-212 each bind substrate. Lys-64 functions as the Proton donor in the catalytic mechanism.

It belongs to the OMP decarboxylase family. Type 1 subfamily. Homodimer.

The catalysed reaction is orotidine 5'-phosphate + H(+) = UMP + CO2. Its pathway is pyrimidine metabolism; UMP biosynthesis via de novo pathway; UMP from orotate: step 2/2. In terms of biological role, catalyzes the decarboxylation of orotidine 5'-monophosphate (OMP) to uridine 5'-monophosphate (UMP). The sequence is that of Orotidine 5'-phosphate decarboxylase from Pseudomonas fluorescens (strain ATCC BAA-477 / NRRL B-23932 / Pf-5).